Consider the following 363-residue polypeptide: 3-dehydroquinate synthase (363 aa).

Residues 134–135 (TT), K147, K156, and 174–177 (TLIT) each bind NAD(+). Positions 189, 254, and 271 each coordinate Zn(2+).

Belongs to the sugar phosphate cyclases superfamily. Dehydroquinate synthase family. Requires NAD(+) as cofactor. It depends on Co(2+) as a cofactor. Zn(2+) is required as a cofactor.

It localises to the cytoplasm. It catalyses the reaction 7-phospho-2-dehydro-3-deoxy-D-arabino-heptonate = 3-dehydroquinate + phosphate. It functions in the pathway metabolic intermediate biosynthesis; chorismate biosynthesis; chorismate from D-erythrose 4-phosphate and phosphoenolpyruvate: step 2/7. Its function is as follows. Catalyzes the conversion of 3-deoxy-D-arabino-heptulosonate 7-phosphate (DAHP) to dehydroquinate (DHQ). The chain is 3-dehydroquinate synthase from Prochlorococcus marinus subsp. pastoris (strain CCMP1986 / NIES-2087 / MED4).